The following is a 295-amino-acid chain: Phosphatidylglycerol--prolipoprotein diacylglyceryl transferase (295 aa).

Transmembrane regions (helical) follow at residues 28 to 48 (WYALAYIAGIVIAWRLAVLAT), 69 to 89 (LLTWIILGVILGGRLGFVLFY), 101 to 121 (ILMVWQGGMAFHGGLLGVVIA), and 131 to 151 (IPKLSLADLITHTVAPGLLLG). Position 152 (Arg152) interacts with a 1,2-diacyl-sn-glycero-3-phospho-(1'-sn-glycerol). A run of 3 helical transmembrane segments spans residues 195 to 215 (QLYEAALEGLLLGTLLLWLVW), 224 to 244 (GLITGVFLAGYGLSRFVVEFF), and 268 to 288 (GLTMGQLLSLPMIALGLWFVL).

This sequence belongs to the Lgt family.

It is found in the cell inner membrane. The catalysed reaction is L-cysteinyl-[prolipoprotein] + a 1,2-diacyl-sn-glycero-3-phospho-(1'-sn-glycerol) = an S-1,2-diacyl-sn-glyceryl-L-cysteinyl-[prolipoprotein] + sn-glycerol 1-phosphate + H(+). It participates in protein modification; lipoprotein biosynthesis (diacylglyceryl transfer). Functionally, catalyzes the transfer of the diacylglyceryl group from phosphatidylglycerol to the sulfhydryl group of the N-terminal cysteine of a prolipoprotein, the first step in the formation of mature lipoproteins. This is Phosphatidylglycerol--prolipoprotein diacylglyceryl transferase from Ruegeria pomeroyi (strain ATCC 700808 / DSM 15171 / DSS-3) (Silicibacter pomeroyi).